The chain runs to 427 residues: Putative transporter YdfJ (427 aa).

Topologically, residues 1–7 are cytoplasmic; it reads MDFQLYS. Transmembrane regions (helical) follow at residues 8–28 and 29–49; these read LGAA…AMAL and ILAM…AFIF. Topologically, residues 50–74 are cytoplasmic; the sequence is GKMGDRIGRKKVLFITITMMGICTT. A helical membrane pass occupies residues 75-95; that stretch reads LIGVLPTYAQIGVFAPILLVT. At 96-97 the chain is on the periplasmic side; sequence LR. Residues 98–118 form a helical membrane-spanning segment; sequence IIQGLGAGAEISGAGTMLAEY. Residues 119–132 lie on the Cytoplasmic side of the membrane; the sequence is APKGKRGIISSFVA. Residues 133–153 traverse the membrane as a helical segment; sequence MGTNCGTLSATAIWAFMFFIL. The Periplasmic portion of the chain corresponds to 154-157; sequence SKEE. Residues 158-178 form a helical membrane-spanning segment; it reads LLAWGWRIPFLASVVVMVFAI. The Cytoplasmic segment spans residues 179–225; sequence WLRMNLKESPVFEKVNDSNQPTAKPAPAGSMFQSKSFWLATGLRFGQ. The helical transmembrane segment at 226-246 threads the bilayer; that stretch reads AGNSGLIQTFLAGYLVQTLLF. Residues 247–251 lie on the Periplasmic side of the membrane; the sequence is NKAIP. Residues 252–272 traverse the membrane as a helical segment; the sequence is TDALMISSILGFMTIPFLGWL. Over 273 to 279 the chain is Cytoplasmic; that stretch reads SDKIGRR. The chain crosses the membrane as a helical span at residues 280 to 300; the sequence is IPYIIMNTSAIVLAWPMLSII. At 301–307 the chain is on the periplasmic side; that stretch reads VDKSYAP. The chain crosses the membrane as a helical span at residues 308 to 328; sequence STIMVALIVIHNCAVLGLFAL. Residues 329 to 351 lie on the Cytoplasmic side of the membrane; it reads ENITMAEMFGCKNRFTRMAISKE. The helical transmembrane segment at 352–372 threads the bilayer; sequence IGGLIASGFGPILAGIFCTMT. E373 is a topological domain (periplasmic). The helical transmembrane segment at 374–394 threads the bilayer; it reads SWYPIAIMIMAYSVIGLISAL. Residues 395–427 are Cytoplasmic-facing; that stretch reads KMPEVKDRDLSALEDAAEDQPRVVRAAQPSRSL.

Belongs to the major facilitator superfamily. Metabolite:H+ Symporter (MHS) family (TC 2.A.1.6) family.

It is found in the cell inner membrane. In terms of biological role, when overexpressed in human HEK-293 cells forms an inward rectifying potassium channel. In Escherichia coli (strain K12), this protein is Putative transporter YdfJ (ydfJ).